A 300-amino-acid polypeptide reads, in one-letter code: Porphobilinogen deaminase (300 aa).

S-(dipyrrolylmethanemethyl)cysteine is present on C239.

The protein belongs to the HMBS family. In terms of assembly, monomer. It depends on dipyrromethane as a cofactor.

The enzyme catalyses 4 porphobilinogen + H2O = hydroxymethylbilane + 4 NH4(+). Its pathway is porphyrin-containing compound metabolism; protoporphyrin-IX biosynthesis; coproporphyrinogen-III from 5-aminolevulinate: step 2/4. Functionally, tetrapolymerization of the monopyrrole PBG into the hydroxymethylbilane pre-uroporphyrinogen in several discrete steps. In Francisella tularensis subsp. holarctica (strain OSU18), this protein is Porphobilinogen deaminase.